Here is a 334-residue protein sequence, read N- to C-terminus: Galactosylgalactosylxylosylprotein 3-beta-glucuronosyltransferase 1 (334 aa).

The Cytoplasmic portion of the chain corresponds to M1 to D6. The tract at residues K3–R5 is essential for transport from endoplasmic reticulum to Golgi apparatus and interaction with SAR1A. A helical; Signal-anchor for type II membrane protein transmembrane segment spans residues I7–S27. At S28 to I334 the chain is on the lumenal side. UDP-alpha-D-glucuronate is bound at residue P91–Y93. T103 and T108 each carry phosphothreonine. Position 122 (D122) interacts with UDP-alpha-D-glucuronate. N-linked (GlcNAc...) asparagine glycosylation is present at N140. Residues R165 and R170 each coordinate UDP-alpha-D-glucuronate. N184 carries an N-linked (GlcNAc...) asparagine glycan. D195–D197 contacts UDP-alpha-D-glucuronate. Position 197 (D197) interacts with Mn(2+). The segment at F245–D254 is interaction with galactose moiety of substrate glycoprotein. The Proton donor/acceptor role is filled by E284. The N-linked (GlcNAc...) asparagine glycan is linked to N303. H311–R313 serves as a coordination point for UDP-alpha-D-glucuronate.

The protein belongs to the glycosyltransferase 43 family. As to quaternary structure, homodimer. Interacts with SAR1A. It depends on Mn(2+) as a cofactor. The soluble form derives from the membrane form by proteolytic processing.

The protein resides in the golgi apparatus membrane. It is found in the secreted. It localises to the endoplasmic reticulum membrane. It catalyses the reaction 3-O-(beta-D-galactosyl-(1-&gt;3)-beta-D-galactosyl-(1-&gt;4)-beta-D-xylosyl)-L-seryl-[protein] + UDP-alpha-D-glucuronate = 3-O-(beta-D-GlcA-(1-&gt;3)-beta-D-Gal-(1-&gt;3)-beta-D-Gal-(1-&gt;4)-beta-D-Xyl)-L-seryl-[protein] + UDP + H(+). It functions in the pathway protein modification; protein glycosylation. Involved in the biosynthesis of L2/HNK-1 carbohydrate epitope on glycoproteins. Can also play a role in glycosaminoglycan biosynthesis. Substrates include asialo-orosomucoid (ASOR), asialo-fetuin, and asialo-neural cell adhesion molecule. Requires sphingomyelin for activity: stearoyl-sphingomyelin was the most effective, followed by palmitoyl-sphingomyelin and lignoceroyl-sphingomyelin. Activity was demonstrated only for sphingomyelin with a saturated fatty acid and not for that with an unsaturated fatty acid, regardless of the length of the acyl group. The polypeptide is Galactosylgalactosylxylosylprotein 3-beta-glucuronosyltransferase 1 (Mus musculus (Mouse)).